We begin with the raw amino-acid sequence, 428 residues long: Phosphomethylpyrimidine synthase 2 (428 aa).

Substrate-binding positions include Met94, Tyr123, His162, 184-186, 225-228, and Glu264; these read SRG and NGMR. His268 lines the Zn(2+) pocket. Tyr291 serves as a coordination point for substrate. His332 provides a ligand contact to Zn(2+). The [4Fe-4S] cluster site is built by Cys408, Cys411, and Cys415.

This sequence belongs to the ThiC family. It depends on [4Fe-4S] cluster as a cofactor.

It carries out the reaction 5-amino-1-(5-phospho-beta-D-ribosyl)imidazole + S-adenosyl-L-methionine = 4-amino-2-methyl-5-(phosphooxymethyl)pyrimidine + CO + 5'-deoxyadenosine + formate + L-methionine + 3 H(+). The protein operates within cofactor biosynthesis; thiamine diphosphate biosynthesis. Catalyzes the synthesis of the hydroxymethylpyrimidine phosphate (HMP-P) moiety of thiamine from aminoimidazole ribotide (AIR) in a radical S-adenosyl-L-methionine (SAM)-dependent reaction. This chain is Phosphomethylpyrimidine synthase 2, found in Methanosarcina acetivorans (strain ATCC 35395 / DSM 2834 / JCM 12185 / C2A).